Here is a 640-residue protein sequence, read N- to C-terminus: Asparagine synthetase domain-containing protein 1 (640 aa).

C2 acts as the For GATase activity in catalysis. In terms of domain architecture, Glutamine amidotransferase type-2 spans 2–184 (CGICCAVSFS…ASGIFRIDLK (183 aa)). The Asparagine synthetase domain maps to 286 to 602 (QFIGVLSTAV…GLTASALLPK (317 aa)).

This is Asparagine synthetase domain-containing protein 1 (ASNSD1) from Bos taurus (Bovine).